A 415-amino-acid chain; its full sequence is Pectin acetylesterase 12 (415 aa).

A signal peptide spans 1–20 (MVKLLLVGFVVAGIILGTQA). Asn-27 is a glycosylation site (N-linked (GlcNAc...) asparagine). Residues Ser-197, Asp-293, and His-360 each act as charge relay system in the active site.

This sequence belongs to the pectinacetylesterase family.

Its subcellular location is the secreted. The protein localises to the cell wall. In terms of biological role, hydrolyzes acetyl esters in homogalacturonan regions of pectin. In type I primary cell wall, galacturonic acid residues of pectin can be acetylated at the O-2 and O-3 positions. Decreasing the degree of acetylation of pectin gels in vitro alters their physical properties. The polypeptide is Pectin acetylesterase 12 (Arabidopsis thaliana (Mouse-ear cress)).